We begin with the raw amino-acid sequence, 196 residues long: Ribonuclease HII (196 aa).

In terms of domain architecture, RNase H type-2 spans 9–196 (NLIAGVDEVG…APVKRALNLV (188 aa)). Positions 15, 16, and 107 each coordinate a divalent metal cation.

This sequence belongs to the RNase HII family. The cofactor is Mn(2+). It depends on Mg(2+) as a cofactor.

It is found in the cytoplasm. It catalyses the reaction Endonucleolytic cleavage to 5'-phosphomonoester.. Its function is as follows. Endonuclease that specifically degrades the RNA of RNA-DNA hybrids. The sequence is that of Ribonuclease HII from Proteus mirabilis (strain HI4320).